A 500-amino-acid polypeptide reads, in one-letter code: NAD(P)H-quinone oxidoreductase chain 4, chloroplastic (500 aa).

14 helical membrane-spanning segments follow: residues 4-24 (FPWL…IFFL), 35-55 (YTMG…CYHF), 87-107 (IGPI…AWPV), 113-130 (LFHF…GLFS), 134-154 (LLLF…LLSM), 167-187 (FILY…GMGL), 208-228 (GLEI…LPII), 242-262 (HYST…YGLI), 274-294 (SIFS…AALT), 305-325 (IAYS…SLTN), 330-350 (GAIL…FLGG), 386-406 (LALP…GIIT), 416-436 (IIIT…LLSM), and 463-483 (FVSI…DLVI).

The protein belongs to the complex I subunit 4 family.

The protein resides in the plastid. The protein localises to the chloroplast thylakoid membrane. The catalysed reaction is a plastoquinone + NADH + (n+1) H(+)(in) = a plastoquinol + NAD(+) + n H(+)(out). The enzyme catalyses a plastoquinone + NADPH + (n+1) H(+)(in) = a plastoquinol + NADP(+) + n H(+)(out). The polypeptide is NAD(P)H-quinone oxidoreductase chain 4, chloroplastic (Lemna minor (Common duckweed)).